The chain runs to 142 residues: Large ribosomal subunit protein uL13 (142 aa).

Belongs to the universal ribosomal protein uL13 family. In terms of assembly, part of the 50S ribosomal subunit.

This protein is one of the early assembly proteins of the 50S ribosomal subunit, although it is not seen to bind rRNA by itself. It is important during the early stages of 50S assembly. This is Large ribosomal subunit protein uL13 from Trichlorobacter lovleyi (strain ATCC BAA-1151 / DSM 17278 / SZ) (Geobacter lovleyi).